A 469-amino-acid polypeptide reads, in one-letter code: Putative dipeptidase SAB1611c (469 aa).

A Zn(2+)-binding site is contributed by His-84. The active site involves Asp-86. Asp-115 provides a ligand contact to Zn(2+). Catalysis depends on Glu-149, which acts as the Proton acceptor. Glu-150, Asp-173, and His-440 together coordinate Zn(2+).

Belongs to the peptidase M20A family. Zn(2+) is required as a cofactor.

The polypeptide is Putative dipeptidase SAB1611c (Staphylococcus aureus (strain bovine RF122 / ET3-1)).